The primary structure comprises 1154 residues: Paired amphipathic helix protein pst3 (1154 aa).

Disordered stretches follow at residues Met1–Thr71 and Ser91–Asn110. Basic and acidic residues predominate over residues Asp9–His27. Polar residues-rich tracts occupy residues Ser32 to His45 and Gln100 to Asn110. One can recognise a PAH 1 domain in the interval Arg111–Gly181. 2 disordered regions span residues Gly199–Asn249 and Asp321–Arg376. Low complexity predominate over residues Ser228–Pro241. Residues Pro252–Asn322 enclose the PAH 2 domain. 2 stretches are compositionally biased toward polar residues: residues Val323–Pro337 and Ala365–Arg376. Positions Ser403–Ser472 constitute a PAH 3 domain. The disordered stretch occupies residues Asn797–Asp824.

The protein localises to the nucleus. This is Paired amphipathic helix protein pst3 (pst3) from Schizosaccharomyces pombe (strain 972 / ATCC 24843) (Fission yeast).